The following is a 517-amino-acid chain: Protein disulfide-isomerase A5 (517 aa).

The first 21 residues, Met-1–Ser-21, serve as a signal peptide directing secretion. 4 cysteine pairs are disulfide-bonded: Cys-83–Cys-92, Cys-180–Cys-183, Cys-303–Cys-306, and Cys-424–Cys-427. Thioredoxin domains lie at Phe-132–Pro-259, Pro-268–Ala-382, and Trp-376–Glu-504. The Prevents secretion from ER motif lies at Arg-514–Leu-517.

It belongs to the protein disulfide isomerase family.

The protein resides in the endoplasmic reticulum lumen. It catalyses the reaction Catalyzes the rearrangement of -S-S- bonds in proteins.. This Rattus norvegicus (Rat) protein is Protein disulfide-isomerase A5 (Pdia5).